The chain runs to 375 residues: Anhydro-N-acetylmuramic acid kinase (375 aa).

Position 12–19 (12–19 (GTSMDGVD)) interacts with ATP.

The protein belongs to the anhydro-N-acetylmuramic acid kinase family.

The enzyme catalyses 1,6-anhydro-N-acetyl-beta-muramate + ATP + H2O = N-acetyl-D-muramate 6-phosphate + ADP + H(+). The protein operates within amino-sugar metabolism; 1,6-anhydro-N-acetylmuramate degradation. It participates in cell wall biogenesis; peptidoglycan recycling. Catalyzes the specific phosphorylation of 1,6-anhydro-N-acetylmuramic acid (anhMurNAc) with the simultaneous cleavage of the 1,6-anhydro ring, generating MurNAc-6-P. Is required for the utilization of anhMurNAc either imported from the medium or derived from its own cell wall murein, and thus plays a role in cell wall recycling. This is Anhydro-N-acetylmuramic acid kinase from Photobacterium profundum (strain SS9).